A 311-amino-acid polypeptide reads, in one-letter code: Nucleotide-binding protein Acel_1111 (311 aa).

An ATP-binding site is contributed by 30-37 (GLSGAGRS). 81-84 (DVRS) lines the GTP pocket.

The protein belongs to the RapZ-like family.

Displays ATPase and GTPase activities. The protein is Nucleotide-binding protein Acel_1111 of Acidothermus cellulolyticus (strain ATCC 43068 / DSM 8971 / 11B).